The chain runs to 651 residues: Threonine--tRNA ligase (651 aa).

A TGS domain is found at 1-61; that stretch reads MPTIQLPDGS…DKDVSLRIIT (61 aa). Residues 242–533 are catalytic; that stretch reads DHRLLAKKMD…LLEESAGKLP (292 aa). 3 residues coordinate Zn(2+): cysteine 333, histidine 384, and histidine 510. The tract at residues 631–651 is disordered; the sequence is ISQRSRKSPAPSPLFPVGGES.

It belongs to the class-II aminoacyl-tRNA synthetase family. In terms of assembly, homodimer. The cofactor is Zn(2+).

The protein localises to the cytoplasm. It carries out the reaction tRNA(Thr) + L-threonine + ATP = L-threonyl-tRNA(Thr) + AMP + diphosphate + H(+). Catalyzes the attachment of threonine to tRNA(Thr) in a two-step reaction: L-threonine is first activated by ATP to form Thr-AMP and then transferred to the acceptor end of tRNA(Thr). Also edits incorrectly charged L-seryl-tRNA(Thr). The chain is Threonine--tRNA ligase from Coxiella burnetii (strain RSA 493 / Nine Mile phase I).